Here is an 82-residue protein sequence, read N- to C-terminus: Large ribosomal subunit protein bL31B (82 aa).

It belongs to the bacterial ribosomal protein bL31 family. Type B subfamily. In terms of assembly, part of the 50S ribosomal subunit after the end of exponential growth.

While neither of the L31 paralogs is essential, this protein does not seem to function as the main L31 protein. Has a higher affinity for 70S ribosomes than the zinc-containing L31 paralog; is able to displace it to varying extents, even under zinc-replete conditions. This Bacillus subtilis (strain 168) protein is Large ribosomal subunit protein bL31B (rpmE2).